Reading from the N-terminus, the 548-residue chain is Probable malate:quinone oxidoreductase (548 aa).

Residues 521 to 548 form a disordered region; it reads DKPQAADSTPKPQLKPKPVQKEVADIAL. Basic and acidic residues predominate over residues 539-548; the sequence is VQKEVADIAL.

It belongs to the MQO family. It depends on FAD as a cofactor.

It catalyses the reaction (S)-malate + a quinone = a quinol + oxaloacetate. It participates in carbohydrate metabolism; tricarboxylic acid cycle; oxaloacetate from (S)-malate (quinone route): step 1/1. This chain is Probable malate:quinone oxidoreductase, found in Escherichia coli (strain ATCC 8739 / DSM 1576 / NBRC 3972 / NCIMB 8545 / WDCM 00012 / Crooks).